The chain runs to 112 residues: Iron-sulfur cluster assembly protein CyaY (112 aa).

This sequence belongs to the frataxin family.

Functionally, involved in iron-sulfur (Fe-S) cluster assembly. May act as a regulator of Fe-S biogenesis. The sequence is that of Iron-sulfur cluster assembly protein CyaY from Delftia acidovorans (strain DSM 14801 / SPH-1).